The sequence spans 232 residues: Ubiquinone biosynthesis O-methyltransferase (232 aa).

S-adenosyl-L-methionine contacts are provided by arginine 36, glycine 55, aspartate 76, and leucine 120.

Belongs to the methyltransferase superfamily. UbiG/COQ3 family.

The enzyme catalyses a 3-demethylubiquinol + S-adenosyl-L-methionine = a ubiquinol + S-adenosyl-L-homocysteine + H(+). It carries out the reaction a 3-(all-trans-polyprenyl)benzene-1,2-diol + S-adenosyl-L-methionine = a 2-methoxy-6-(all-trans-polyprenyl)phenol + S-adenosyl-L-homocysteine + H(+). The protein operates within cofactor biosynthesis; ubiquinone biosynthesis. Its function is as follows. O-methyltransferase that catalyzes the 2 O-methylation steps in the ubiquinone biosynthetic pathway. This Pseudomonas syringae pv. tomato (strain ATCC BAA-871 / DC3000) protein is Ubiquinone biosynthesis O-methyltransferase.